A 400-amino-acid polypeptide reads, in one-letter code: Acetate kinase (400 aa).

Asn10 is a Mg(2+) binding site. Lys17 contributes to the ATP binding site. Arg91 provides a ligand contact to substrate. The active-site Proton donor/acceptor is the Asp150. ATP contacts are provided by residues 210–214 (HLGNG), 285–287 (DCR), and 333–337 (GIGEN). Residue Glu387 participates in Mg(2+) binding.

This sequence belongs to the acetokinase family. In terms of assembly, homodimer. The cofactor is Mg(2+). Requires Mn(2+) as cofactor.

It is found in the cytoplasm. It carries out the reaction acetate + ATP = acetyl phosphate + ADP. It participates in metabolic intermediate biosynthesis; acetyl-CoA biosynthesis; acetyl-CoA from acetate: step 1/2. Functionally, catalyzes the formation of acetyl phosphate from acetate and ATP. Can also catalyze the reverse reaction. This Pectobacterium atrosepticum (strain SCRI 1043 / ATCC BAA-672) (Erwinia carotovora subsp. atroseptica) protein is Acetate kinase.